Here is a 315-residue protein sequence, read N- to C-terminus: MASGNLTWVTEFILVGVSDDPELQIPLFLVFLVLYLLTVAGNLGIITLTSVDPQLQTPMYFFLRHLAIINLCNSTVVAPKMLVNFLVTKKTISYYGCAAQLGGFLVFIVAEIFTLAAMAYDRYVAIWSPLLYAVVVSPKVCRLLVSLTYLQSLITALTVSSCVFSVSYCSSNIINHFYCDDVPLLALSCSDTYIPETAVFIFSGTNLLFSMIVVLISYFNIVITILRIRSSEGRQKAFSTCASHMIAVVVFYGTLLFMYLQPRSNHSLDTDKMASVFYTLVIPVLNPLIYSLRNKNVKDALKRFLDNPCRSLKLM.

Residues 1–24 (MASGNLTWVTEFILVGVSDDPELQ) lie on the Extracellular side of the membrane. A glycan (N-linked (GlcNAc...) asparagine) is linked at N5. A helical membrane pass occupies residues 25–45 (IPLFLVFLVLYLLTVAGNLGI). Residues 46-57 (ITLTSVDPQLQT) are Cytoplasmic-facing. Residues 58-78 (PMYFFLRHLAIINLCNSTVVA) form a helical membrane-spanning segment. The Extracellular segment spans residues 79-97 (PKMLVNFLVTKKTISYYGC). The cysteines at positions 97 and 179 are disulfide-linked. A helical transmembrane segment spans residues 98–118 (AAQLGGFLVFIVAEIFTLAAM). Residues 119-143 (AYDRYVAIWSPLLYAVVVSPKVCRL) are Cytoplasmic-facing. The helical transmembrane segment at 144-164 (LVSLTYLQSLITALTVSSCVF) threads the bilayer. Topologically, residues 165–205 (SVSYCSSNIINHFYCDDVPLLALSCSDTYIPETAVFIFSGT) are extracellular. The chain crosses the membrane as a helical span at residues 206–226 (NLLFSMIVVLISYFNIVITIL). Topologically, residues 227-239 (RIRSSEGRQKAFS) are cytoplasmic. A helical transmembrane segment spans residues 240–260 (TCASHMIAVVVFYGTLLFMYL). Topologically, residues 261-271 (QPRSNHSLDTD) are extracellular. N265 carries an N-linked (GlcNAc...) asparagine glycan. A helical membrane pass occupies residues 272-292 (KMASVFYTLVIPVLNPLIYSL). The Cytoplasmic segment spans residues 293 to 315 (RNKNVKDALKRFLDNPCRSLKLM).

It belongs to the G-protein coupled receptor 1 family.

Its subcellular location is the membrane. Functionally, odorant receptor. This Homo sapiens (Human) protein is Olfactory receptor 8J2 (OR8J2).